The primary structure comprises 1073 residues: Duffy receptor alpha form (1073 aa).

An N-terminal signal peptide occupies residues 1-21 (MEGKKKRPLFFLLVLLLSHKA). The Extracellular portion of the chain corresponds to 22-1007 (NNVLFERMNG…YECFTKGSST (986 aa)). N-linked (GlcNAc...) asparagine glycosylation is found at N134, N179, and N202. 2 disulfide bridges follow: C214-C243 and C227-C234. N252 and N348 each carry an N-linked (GlcNAc...) asparagine glycan. Intrachain disulfides connect C297–C374, C412–C429, C424–C504, and C433–C502. The interval 517–915 (VKNVGSGVES…LNNRKLNRDQ (399 aa)) is disordered. Over residues 528 to 543 (AASSNPITEAVKSSSG) the composition is skewed to polar residues. Residues 546 to 561 (KVQEDSAHKSVNKGEG) are compositionally biased toward basic and acidic residues. The span at 562 to 576 (KSSTNEADPGSQSGA) shows a compositional bias: polar residues. Composition is skewed to basic and acidic residues over residues 675 to 710 (GEVH…DDRS) and 717 to 734 (HTDE…KDTE). N-linked (GlcNAc...) asparagine glycosylation is present at N679. Residues 736–766 (AGGSTLTPEQNVSVASDNGNVPGSGNKQNEG) are compositionally biased toward polar residues. N-linked (GlcNAc...) asparagine glycans are attached at residues N746, N779, and N788. A compositionally biased stretch (basic and acidic residues) spans 799 to 810 (GNEKDFQKHDFM). Composition is skewed to low complexity over residues 821-843 (SDHT…SSDH) and 851-864 (SDQT…SDQT). The segment covering 867 to 891 (TEGHHRDNVRNPEIKSSEDMSKGDF) has biased composition (basic and acidic residues). A compositionally biased stretch (polar residues) spans 893–909 (RNSNSNELYSHNNLNNR). The chain crosses the membrane as a helical span at residues 1008–1029 (GIVYFATGGAFLIILLLFASWN). At 1030–1073 (AASNDYEEEATFDEFVEYSDDIHRTPLMPNDIEHMQQFTPLDYS) the chain is on the cytoplasmic side.

In terms of assembly, interacts (via region II) with human ACKR1 (via N-terminal extracellular domain). Interacts (via region II) with rhesus macaque ACKR1 (via N-terminal extracellular domain).

It localises to the cell membrane. Its subcellular location is the cytoplasmic vesicle. The protein localises to the secretory vesicle. The protein resides in the microneme. Binds to the human erythrocyte Duffy blood group determinant (ACKR1). Binds to the rhesus macaque erythrocyte Duffy blood group determinant (ACKR1). This chain is Duffy receptor alpha form, found in Plasmodium knowlesi.